Here is a 129-residue protein sequence, read N- to C-terminus: Histone H2A.J (129 aa).

The segment at 1–22 (MSGRGKQGGKVRAKAKSRSSRA) is disordered. N6-acetyllysine is present on residues Lys-6 and Lys-10. Residues 7-19 (QGGKVRAKAKSRS) are compositionally biased toward basic residues. Lys-10 bears the N6-lactoyllysine; alternate mark. Residue Gln-105 is modified to N5-methylglutamine. Thr-121 carries the phosphothreonine; by DCAF1 modification.

The protein belongs to the histone H2A family. In terms of assembly, the nucleosome is a histone octamer containing two molecules each of H2A, H2B, H3 and H4 assembled in one H3-H4 heterotetramer and two H2A-H2B heterodimers. The octamer wraps approximately 147 bp of DNA. In terms of processing, monoubiquitination of Lys-120 (H2AXK119ub) gives a specific tag for epigenetic transcriptional repression. Following DNA double-strand breaks (DSBs), it is ubiquitinated through 'Lys-63' linkage of ubiquitin moieties. Glutamine methylation at Gln-105 (H2AQ104me) by FBL is specifically dedicated to polymerase I. It is present at 35S ribosomal DNA locus and impairs binding of the FACT complex. Post-translationally, phosphorylation on Ser-2 (H2AS1ph) is enhanced during mitosis. Phosphorylation on Ser-2 by RPS6KA5/MSK1 directly represses transcription. Acetylation of H3 inhibits Ser-2 phosphorylation by RPS6KA5/MSK1. Phosphorylation at Thr-121 (H2AT120ph) by DCAF1 is present in the regulatory region of many tumor suppresor genes and down-regulates their transcription.

The protein resides in the nucleus. The protein localises to the chromosome. Its function is as follows. Core component of nucleosome. Nucleosomes wrap and compact DNA into chromatin, limiting DNA accessibility to the cellular machineries which require DNA as a template. Histones thereby play a central role in transcription regulation, DNA repair, DNA replication and chromosomal stability. DNA accessibility is regulated via a complex set of post-translational modifications of histones, also called histone code, and nucleosome remodeling. This chain is Histone H2A.J, found in Macaca fascicularis (Crab-eating macaque).